Here is a 226-residue protein sequence, read N- to C-terminus: Octanoyltransferase (226 aa).

One can recognise a BPL/LPL catalytic domain in the interval 34 to 216 (GEANELVWLL…AWTEAFGPVR (183 aa)). Substrate is bound by residues 73-80 (RGGEYTYH), 145-147 (AIG), and 158-160 (GIA). Residue C176 is the Acyl-thioester intermediate of the active site.

This sequence belongs to the LipB family.

The protein resides in the cytoplasm. The catalysed reaction is octanoyl-[ACP] + L-lysyl-[protein] = N(6)-octanoyl-L-lysyl-[protein] + holo-[ACP] + H(+). The protein operates within protein modification; protein lipoylation via endogenous pathway; protein N(6)-(lipoyl)lysine from octanoyl-[acyl-carrier-protein]: step 1/2. Functionally, catalyzes the transfer of endogenously produced octanoic acid from octanoyl-acyl-carrier-protein onto the lipoyl domains of lipoate-dependent enzymes. Lipoyl-ACP can also act as a substrate although octanoyl-ACP is likely to be the physiological substrate. The chain is Octanoyltransferase from Maricaulis maris (strain MCS10) (Caulobacter maris).